A 289-amino-acid chain; its full sequence is Diaminopimelate epimerase (289 aa).

Residues N13, Q47, and N67 each coordinate substrate. The active-site Proton donor is C76. Substrate-binding positions include 77-78 (GN), N167, N200, and 218-219 (ER). Residue C227 is the Proton acceptor of the active site. 228–229 (GT) is a binding site for substrate.

The protein belongs to the diaminopimelate epimerase family. As to quaternary structure, homodimer.

The protein localises to the cytoplasm. It carries out the reaction (2S,6S)-2,6-diaminopimelate = meso-2,6-diaminopimelate. It participates in amino-acid biosynthesis; L-lysine biosynthesis via DAP pathway; DL-2,6-diaminopimelate from LL-2,6-diaminopimelate: step 1/1. In terms of biological role, catalyzes the stereoinversion of LL-2,6-diaminopimelate (L,L-DAP) to meso-diaminopimelate (meso-DAP), a precursor of L-lysine and an essential component of the bacterial peptidoglycan. The protein is Diaminopimelate epimerase of Burkholderia vietnamiensis (strain G4 / LMG 22486) (Burkholderia cepacia (strain R1808)).